The following is a 429-amino-acid chain: Cyclin-B2-1 (429 aa).

It belongs to the cyclin family. Cyclin AB subfamily. As to quaternary structure, interacts with CDC20-1 and CDC20-2. As to expression, expressed in roots, stems, leaves, flowers and siliques.

This Arabidopsis thaliana (Mouse-ear cress) protein is Cyclin-B2-1 (CYCB2-1).